The following is a 328-amino-acid chain: RNA-binding motif protein, X-linked 2 (328 aa).

A Glycyl lysine isopeptide (Lys-Gly) (interchain with G-Cter in SUMO2) cross-link involves residue K8. In terms of domain architecture, RRM spans 36 to 114 (AWIFLGGLPY…RTIRVDHVAN (79 aa)). Positions 118-328 (PQESEDVDDV…SFHASDRRHY (211 aa)) are disordered. The residue at position 140 (T140) is a Phosphothreonine. At S149 the chain carries Phosphoserine. The span at 157–172 (TKKPKKDKKEKKKKKE) shows a compositional bias: basic residues. 3 stretches are compositionally biased toward basic and acidic residues: residues 192–219 (TVKE…ECRE), 236–247 (GRAEEPEWEAKK), and 255–273 (KPSS…DRGR). K246 participates in a covalent cross-link: Glycyl lysine isopeptide (Lys-Gly) (interchain with G-Cter in SUMO2). Phosphoserine is present on S274. Basic residues predominate over residues 291–314 (HRSRSRSRSRSPDRSHRHKKHRYS). Positions 315–328 (HERESFHASDRRHY) are enriched in basic and acidic residues.

The protein belongs to the IST3 family. As to quaternary structure, part of the activated spliceosome B/catalytic step 1 spliceosome, one of the forms of the spliceosome which has a well-formed active site but still cannot catalyze the branching reaction and is composed of at least 52 proteins, the U2, U5 and U6 snRNAs and the pre-mRNA. Component of the minor spliceosome, which splices U12-type introns.

It is found in the nucleus. Its function is as follows. Involved in pre-mRNA splicing as component of the activated spliceosome. As a component of the minor spliceosome, involved in the splicing of U12-type introns in pre-mRNAs. The chain is RNA-binding motif protein, X-linked 2 (Rbmx2) from Rattus norvegicus (Rat).